A 303-amino-acid polypeptide reads, in one-letter code: Ribonuclease HIII (303 aa).

One can recognise an RNase H type-2 domain in the interval 85 to 302 (CSLIGSDEVG…TKKAYQLLKK (218 aa)). Residues aspartate 91, glutamate 92, and aspartate 196 each contribute to the a divalent metal cation site.

This sequence belongs to the RNase HII family. RnhC subfamily. It depends on Mn(2+) as a cofactor. Mg(2+) serves as cofactor.

The protein localises to the cytoplasm. The enzyme catalyses Endonucleolytic cleavage to 5'-phosphomonoester.. In terms of biological role, endonuclease that specifically degrades the RNA of RNA-DNA hybrids. The sequence is that of Ribonuclease HIII from Streptococcus mutans serotype c (strain ATCC 700610 / UA159).